A 164-amino-acid chain; its full sequence is Phosphopantetheine adenylyltransferase (164 aa).

Substrate is bound at residue Ser-9. Residues 9–10 (SF) and His-17 contribute to the ATP site. Substrate contacts are provided by Lys-41, Thr-74, and Arg-88. ATP is bound by residues 89–91 (GVR), Glu-99, and 124–130 (NSFVASS).

The protein belongs to the bacterial CoaD family. As to quaternary structure, homohexamer. Mg(2+) is required as a cofactor.

Its subcellular location is the cytoplasm. It catalyses the reaction (R)-4'-phosphopantetheine + ATP + H(+) = 3'-dephospho-CoA + diphosphate. It participates in cofactor biosynthesis; coenzyme A biosynthesis; CoA from (R)-pantothenate: step 4/5. Reversibly transfers an adenylyl group from ATP to 4'-phosphopantetheine, yielding dephospho-CoA (dPCoA) and pyrophosphate. The chain is Phosphopantetheine adenylyltransferase from Lactobacillus helveticus (strain DPC 4571).